The sequence spans 175 residues: ATP synthase subunit delta (175 aa).

This sequence belongs to the ATPase delta chain family. F-type ATPases have 2 components, F(1) - the catalytic core - and F(0) - the membrane proton channel. F(1) has five subunits: alpha(3), beta(3), gamma(1), delta(1), epsilon(1). F(0) has three main subunits: a(1), b(2) and c(10-14). The alpha and beta chains form an alternating ring which encloses part of the gamma chain. F(1) is attached to F(0) by a central stalk formed by the gamma and epsilon chains, while a peripheral stalk is formed by the delta and b chains.

The protein resides in the cell membrane. F(1)F(0) ATP synthase produces ATP from ADP in the presence of a proton or sodium gradient. F-type ATPases consist of two structural domains, F(1) containing the extramembraneous catalytic core and F(0) containing the membrane proton channel, linked together by a central stalk and a peripheral stalk. During catalysis, ATP synthesis in the catalytic domain of F(1) is coupled via a rotary mechanism of the central stalk subunits to proton translocation. In terms of biological role, this protein is part of the stalk that links CF(0) to CF(1). It either transmits conformational changes from CF(0) to CF(1) or is implicated in proton conduction. The sequence is that of ATP synthase subunit delta from Lactococcus lactis subsp. lactis (strain IL1403) (Streptococcus lactis).